Here is a 227-residue protein sequence, read N- to C-terminus: Uracil-DNA glycosylase (227 aa).

The Proton acceptor role is filled by aspartate 65.

This sequence belongs to the uracil-DNA glycosylase (UDG) superfamily. UNG family.

The protein resides in the cytoplasm. It carries out the reaction Hydrolyzes single-stranded DNA or mismatched double-stranded DNA and polynucleotides, releasing free uracil.. Its function is as follows. Excises uracil residues from the DNA which can arise as a result of misincorporation of dUMP residues by DNA polymerase or due to deamination of cytosine. In Lactobacillus delbrueckii subsp. bulgaricus (strain ATCC BAA-365 / Lb-18), this protein is Uracil-DNA glycosylase.